The sequence spans 163 residues: Nucleotide-binding protein syc0675_c (163 aa).

Belongs to the YajQ family.

In terms of biological role, nucleotide-binding protein. The protein is Nucleotide-binding protein syc0675_c of Synechococcus sp. (strain ATCC 27144 / PCC 6301 / SAUG 1402/1) (Anacystis nidulans).